A 474-amino-acid chain; its full sequence is Phosphatidylserine synthase 2 (474 aa).

The Lumenal portion of the chain corresponds to 1 to 62 (MLRSDVRRVA…DDGTNTFFWR (62 aa)). Residues 63 to 83 (AHTLTVLFILTCSLGYVTLLE) traverse the membrane as a helical segment. Residues 84–96 (ETPQDTAYNAKRG) lie on the Cytoplasmic side of the membrane. A helical membrane pass occupies residues 97–117 (IIASILVFLCFGVTQAKDGPF). The Lumenal portion of the chain corresponds to 118 to 126 (SRPHPAYWR). Residues 127-147 (FWLCVSVVYELFLIFILFQTV) traverse the membrane as a helical segment. The Cytoplasmic portion of the chain corresponds to 148–313 (HDGRQFMKFI…EWKPASSLRR (166 aa)). The helical transmembrane segment at 314–334 (WLAVCGIIFVFLLAELNTFYL) threads the bilayer. Lys335 is a topological domain (lumenal). The chain crosses the membrane as a helical span at residues 336–356 (FVLWMPPEHYLVLLRLVFFVN). Over 357–376 (VGGVAMREIYDFMDDLKFHK) the chain is Cytoplasmic. The helical transmembrane segment at 377–397 (KLGQQAWMVAAITVTEFLIVV) threads the bilayer. At 398–403 (KYDPYT) the chain is on the lumenal side. Residues 404–424 (ITLPLPFYVTQCWILGIVLVL) traverse the membrane as a helical segment. The Cytoplasmic portion of the chain corresponds to 425 to 474 (TWTVWRFFIRDITLRYKEIRQQKQHRNEEEKSHRNGDVNSEKDTNKHKKH). The span at 448–468 (QHRNEEEKSHRNGDVNSEKDT) shows a compositional bias: basic and acidic residues. Positions 448–474 (QHRNEEEKSHRNGDVNSEKDTNKHKKH) are disordered.

This sequence belongs to the phosphatidyl serine synthase family.

The protein resides in the endoplasmic reticulum membrane. The enzyme catalyses a 1,2-diacyl-sn-glycero-3-phosphoethanolamine + L-serine = a 1,2-diacyl-sn-glycero-3-phospho-L-serine + ethanolamine. The catalysed reaction is 1-hexadecanoyl-2-(9Z-octadecenoyl)-sn-glycero-3-phosphoethanolamine + L-serine = 1-hexadecanoyl-2-(9Z-octadecenoyl)-sn-glycero-3-phospho-L-serine + ethanolamine. It catalyses the reaction 1-hexadecanoyl-2-(4Z,7Z,10Z,13Z,16Z,19Z-docosahexaenoyl)-sn-glycero-3-phosphoethanolamine + L-serine = 1-hexadecanoyl-2-(4Z,7Z,10Z,13Z,16Z,19Z-docosahexaenoyl)-sn-glycero-3-phosphoserine + ethanolamine. It carries out the reaction 1-octadecanoyl-2-(5Z,8Z,11Z,14Z)-eicosatetraenoyl-sn-glycero-3-phosphoethanolamine + L-serine = 1-octadecanoyl-2-(5Z,8Z,11Z,14Z)-eicosatetraenoyl-sn-glycero-3-phosphoserine + ethanolamine. The enzyme catalyses 1-octadecanoyl-2-(4Z,7Z,10Z,13Z,16Z,19Z-docosahexaenoyl)-sn-glycero-3-phosphoethanolamine + L-serine = 1-octadecanoyl-2-(4Z,7Z,10Z,13Z,16Z,19Z-docosahexaenoyl)-sn-glycero-3-phosphoserine + ethanolamine. The catalysed reaction is 1-(1Z-octadecenyl)-2-(4Z,7Z,10Z,13Z,16Z,19Z-docosahexaenoyl)-sn-glycero-3-phosphoethanolamine + L-serine = 1-(1Z-octadecenyl)-2-(4Z,7Z,10Z,13Z,16Z,19Z-docosahexaenoyl)-sn-glycero-3-phospho-L-serine + ethanolamine. It catalyses the reaction 1-octadecanoyl-2-(9Z-octadecenoyl)-sn-glycero-3-phosphoethanolamine + L-serine = 1-octadecanoyl-2-(9Z-octadecenoyl)-sn-glycero-3-phospho-L-serine + ethanolamine. It carries out the reaction 1-(1Z-octadecenyl)-2-(9Z-octadecenoyl)-sn-glycero-3-phosphoethanolamine + L-serine = 1-(1Z-octadecenyl)-2-(9Z-octadecenoyl)-sn-glycero-3-phospho-L-serine + ethanolamine. The enzyme catalyses 1-(1Z-octadecenyl)-2-(5Z,8Z,11Z,14Z- eicosatetraenoyl)-sn-glycero-3-phosphoethanolamine + L-serine = 1-(1Z-octadecenyl)-2-(5Z,8Z,11Z,14Z-eicosatetraenoyl)-sn-glycero-3-phospho-L-serine + ethanolamine. The protein operates within phospholipid metabolism; phosphatidylserine biosynthesis. Functionally, catalyzes a base-exchange reaction in which the polar head group of phosphatidylethanolamine (PE) or phosphatidylcholine (PC) is replaced by L-serine. Catalyzes the conversion of phosphatatidylethanolamine and does not act on phosphatidylcholine. Can utilize both phosphatidylethanolamine (PE) plasmalogen and diacyl PE as substrate and the latter is six times better utilized, indicating the importance of an ester linkage at the sn-1 position. Although it shows no sn-1 fatty acyl preference, exhibits significant preference towards docosahexaenoic acid (22:6n-3) compared with 18:1 or 20:4 at the sn-2 position. The protein is Phosphatidylserine synthase 2 (ptdss2) of Xenopus tropicalis (Western clawed frog).